The sequence spans 20 residues: Protease inhibitor (20 aa).

As to quaternary structure, monomer. Post-translationally, glycosylated. As to expression, stored in epidermis and secreted into the hemolymph and cuticle. Not detected in the interior of the epidermis, fat body cells or columnar or goblet cells of the midgut epithelium (at protein level).

Functionally, inhibits trypsin and chymotrypsin. This is Protease inhibitor from Antheraea mylitta (Tasar silkworm).